Here is a 100-residue protein sequence, read N- to C-terminus: Small ribosomal subunit protein uS14c (100 aa).

Belongs to the universal ribosomal protein uS14 family. Part of the 30S ribosomal subunit.

Its subcellular location is the plastid. The protein resides in the chloroplast. Binds 16S rRNA, required for the assembly of 30S particles. The protein is Small ribosomal subunit protein uS14c of Aethionema grandiflorum (Persian stone-cress).